We begin with the raw amino-acid sequence, 340 residues long: tRNA-dihydrouridine(20/20a) synthase (340 aa).

FMN contacts are provided by residues 22 to 24 (PMM) and Q75. C105 functions as the Proton donor in the catalytic mechanism. FMN is bound by residues K144, H177, 217-219 (NGG), and 239-240 (GR).

Belongs to the Dus family. DusA subfamily. It depends on FMN as a cofactor.

The catalysed reaction is 5,6-dihydrouridine(20) in tRNA + NADP(+) = uridine(20) in tRNA + NADPH + H(+). The enzyme catalyses 5,6-dihydrouridine(20) in tRNA + NAD(+) = uridine(20) in tRNA + NADH + H(+). It carries out the reaction 5,6-dihydrouridine(20a) in tRNA + NADP(+) = uridine(20a) in tRNA + NADPH + H(+). It catalyses the reaction 5,6-dihydrouridine(20a) in tRNA + NAD(+) = uridine(20a) in tRNA + NADH + H(+). Functionally, catalyzes the synthesis of 5,6-dihydrouridine (D), a modified base found in the D-loop of most tRNAs, via the reduction of the C5-C6 double bond in target uridines. Specifically modifies U20 and U20a in tRNAs. This chain is tRNA-dihydrouridine(20/20a) synthase, found in Xylella fastidiosa (strain 9a5c).